Here is a 301-residue protein sequence, read N- to C-terminus: HPr kinase/phosphorylase (301 aa).

Active-site residues include H134 and K155. G149–S156 lines the ATP pocket. S156 contributes to the Mg(2+) binding site. D173 acts as the Proton acceptor; for phosphorylation activity. Proton donor; for dephosphorylation activity in catalysis. The interval L196–N205 is important for the catalytic mechanism of both phosphorylation and dephosphorylation. E197 contacts Mg(2+). The active site involves R239. Positions P260–K265 are important for the catalytic mechanism of dephosphorylation.

This sequence belongs to the HPrK/P family. As to quaternary structure, homohexamer. The cofactor is Mg(2+).

The catalysed reaction is [HPr protein]-L-serine + ATP = [HPr protein]-O-phospho-L-serine + ADP + H(+). It catalyses the reaction [HPr protein]-O-phospho-L-serine + phosphate + H(+) = [HPr protein]-L-serine + diphosphate. In terms of biological role, catalyzes the ATP- as well as the pyrophosphate-dependent phosphorylation of a specific serine residue in HPr, a phosphocarrier protein of the phosphoenolpyruvate-dependent sugar phosphotransferase system (PTS). HprK/P also catalyzes the pyrophosphate-producing, inorganic phosphate-dependent dephosphorylation (phosphorolysis) of seryl-phosphorylated HPr (P-Ser-HPr). The two antagonistic activities of HprK/P are regulated by several intracellular metabolites, which change their concentration in response to the absence or presence of rapidly metabolisable carbon sources (glucose, fructose, etc.) in the growth medium. Therefore, by controlling the phosphorylation state of HPr, HPrK/P is a sensor enzyme that plays a major role in the regulation of carbon metabolism and sugar transport: it mediates carbon catabolite repression (CCR), and regulates PTS-catalyzed carbohydrate uptake and inducer exclusion. The sequence is that of HPr kinase/phosphorylase from Malacoplasma penetrans (strain HF-2) (Mycoplasma penetrans).